A 576-amino-acid chain; its full sequence is Gamma-aminobutyric acid receptor subunit beta (576 aa).

The signal sequence occupies residues 1–29 (MSDSMLYQTLQTCLPKSRLITLWLAFTLA). At 30 to 268 (MLIQEPRRHA…IQFVRSMGYY (239 aa)) the chain is on the extracellular side. N56 is a glycosylation site (N-linked (GlcNAc...) asparagine). A disulfide bond links C183 and C197. A glycan (N-linked (GlcNAc...) asparagine) is linked at N251. Transmembrane regions (helical) follow at residues 269-289 (LIQI…SFWL), 298-320 (VALG…AALP), and 330-350 (VYLG…ATVG). The Cytoplasmic segment spans residues 351 to 540 (YMAKRIQMRK…TPSDIDKYSR (190 aa)). 2 disordered regions span residues 372 to 418 (QKKQ…QTVS) and 452 to 507 (HDPK…GDAE). Positions 398 to 412 (HGHGHGHHSHGHPHV) are enriched in basic residues. The span at 475-490 (PVGPHGPGPQGPPGGP) shows a compositional bias: pro residues. Gly residues predominate over residues 491–501 (PAGGGGGGAPP). Residues 541-561 (IVFPVCFVCFNLMYWIIYLHV) traverse the membrane as a helical segment.

This sequence belongs to the ligand-gated ion channel (TC 1.A.9) family. Gamma-aminobutyric acid receptor (TC 1.A.9.5) subfamily. Homomultimer.

Its subcellular location is the postsynaptic cell membrane. It localises to the cell membrane. Functionally, GABA, an inhibitory neurotransmitter, mediates neuronal inhibition by binding to the GABA receptor and opening an integral chloride channel. The polypeptide is Gamma-aminobutyric acid receptor subunit beta (Musca domestica (House fly)).